Reading from the N-terminus, the 134-residue chain is Aspartate 1-decarboxylase (134 aa).

S25 serves as the catalytic Schiff-base intermediate with substrate; via pyruvic acid. Residue S25 is modified to Pyruvic acid (Ser). Substrate is bound at residue T57. Y58 (proton donor) is an active-site residue. Residue 73–75 coordinates substrate; it reads GAA.

Belongs to the PanD family. Heterooctamer of four alpha and four beta subunits. Pyruvate is required as a cofactor. Post-translationally, is synthesized initially as an inactive proenzyme, which is activated by self-cleavage at a specific serine bond to produce a beta-subunit with a hydroxyl group at its C-terminus and an alpha-subunit with a pyruvoyl group at its N-terminus.

It is found in the cytoplasm. The catalysed reaction is L-aspartate + H(+) = beta-alanine + CO2. It participates in cofactor biosynthesis; (R)-pantothenate biosynthesis; beta-alanine from L-aspartate: step 1/1. Functionally, catalyzes the pyruvoyl-dependent decarboxylation of aspartate to produce beta-alanine. The protein is Aspartate 1-decarboxylase of Mycolicibacterium gilvum (strain PYR-GCK) (Mycobacterium gilvum (strain PYR-GCK)).